The sequence spans 45 residues: Phospholipase A2 3 (45 aa).

Ca(2+) is bound by residues Tyr-20, Gly-24, and Gly-25. An intrachain disulfide couples Cys-21 to Cys-36. Residue His-39 is part of the active site. Asp-40 provides a ligand contact to Ca(2+).

Ca(2+) serves as cofactor. Expressed by the venom gland.

The protein resides in the secreted. It catalyses the reaction a 1,2-diacyl-sn-glycero-3-phosphocholine + H2O = a 1-acyl-sn-glycero-3-phosphocholine + a fatty acid + H(+). Functionally, PLA2 catalyzes the calcium-dependent hydrolysis of the 2-acyl groups in 3-sn-phosphoglycerides. This is Phospholipase A2 3 from Bothrops diporus (Chaco lancehead).